Here is a 234-residue protein sequence, read N- to C-terminus: UPF0173 metal-dependent hydrolase Atu1317 (234 aa).

Belongs to the UPF0173 family.

The chain is UPF0173 metal-dependent hydrolase Atu1317 from Agrobacterium fabrum (strain C58 / ATCC 33970) (Agrobacterium tumefaciens (strain C58)).